We begin with the raw amino-acid sequence, 341 residues long: Alpha-ketoglutarate-dependent dioxygenase oryG (341 aa).

His-100 serves as a coordination point for substrate. Residues His-140 and Asp-142 each contribute to the Fe cation site. Residue Thr-167 coordinates 2-oxoglutarate. His-299 contributes to the Fe cation binding site. 2-oxoglutarate contacts are provided by Arg-311 and Arg-315. Substrate is bound at residue Arg-315.

Belongs to the TfdA dioxygenase family. Fe(2+) is required as a cofactor.

It functions in the pathway secondary metabolite biosynthesis. Functionally, alpha-ketoglutarate-dependent dioxygenase; part of the gene cluster that mediates the biosynthesis of oryzines, natural products with an unusual maleidride backbone. The two subunits of the fungal fatty acid synthase oryfasA and oryfasB probably form octenoic acid. This fatty acid is most likely activated by the acyl-CoA ligase oryP to give octenyl-CoA before the citrate synthase-like protein oryE catalyzes condensation with oxaloacetate to form tricarboxylic acid. The next steps of the pathways are conjectural, but a favorite possible route has been proposed, beginning with decarboxylation and concomitant dehydration by the decarboxylase oryM, followed by tautomerization, which may lead to the production of a diene intermediate. Reduction of this diene intermediate could give the known metabolite piliformic acid. On the pathway to oryzine B and oryzine A, however, hydroxylation of the diene by the alpha-ketoglutarate-dependent dioxygenase oryG and lactonisation by the lactonohydrolases oryH or oryL could give oryzine B directly. Finally, enoyl reduction by the dehydrogenase oryD would then convert oryzine B into oryzine A. This chain is Alpha-ketoglutarate-dependent dioxygenase oryG, found in Aspergillus oryzae (strain ATCC 42149 / RIB 40) (Yellow koji mold).